The sequence spans 339 residues: DNA-directed RNA polymerase subunit alpha (339 aa).

Positions 1 to 235 are alpha N-terminal domain (alpha-NTD); sequence MTIQKNWQEL…DQLNVFVNFE (235 aa). The tract at residues 251-339 is alpha C-terminal domain (alpha-CTD); that stretch reads FNPAFLKKVD…ELAKRFEDHY (89 aa).

This sequence belongs to the RNA polymerase alpha chain family. In terms of assembly, homodimer. The RNAP catalytic core consists of 2 alpha, 1 beta, 1 beta' and 1 omega subunit. When a sigma factor is associated with the core the holoenzyme is formed, which can initiate transcription.

The catalysed reaction is RNA(n) + a ribonucleoside 5'-triphosphate = RNA(n+1) + diphosphate. In terms of biological role, DNA-dependent RNA polymerase catalyzes the transcription of DNA into RNA using the four ribonucleoside triphosphates as substrates. This chain is DNA-directed RNA polymerase subunit alpha, found in Rhodopseudomonas palustris (strain BisA53).